Reading from the N-terminus, the 199-residue chain is Glycerol-3-phosphate acyltransferase (199 aa).

5 helical membrane passes run A5–V25, K51–A71, V79–Y99, V112–I132, and C153–I173.

This sequence belongs to the PlsY family. As to quaternary structure, probably interacts with PlsX.

The protein localises to the cell inner membrane. The enzyme catalyses an acyl phosphate + sn-glycerol 3-phosphate = a 1-acyl-sn-glycero-3-phosphate + phosphate. Its pathway is lipid metabolism; phospholipid metabolism. Its function is as follows. Catalyzes the transfer of an acyl group from acyl-phosphate (acyl-PO(4)) to glycerol-3-phosphate (G3P) to form lysophosphatidic acid (LPA). This enzyme utilizes acyl-phosphate as fatty acyl donor, but not acyl-CoA or acyl-ACP. The polypeptide is Glycerol-3-phosphate acyltransferase (Solidesulfovibrio magneticus (strain ATCC 700980 / DSM 13731 / RS-1) (Desulfovibrio magneticus)).